The chain runs to 620 residues: MPPSSKSRRLPPAASDSAASDAQKRRKNVGTACSACKARKLKCTGAPPCANCVKSRIECTLDETADRRRRGVLKRKIDKLEDQEDLLGRLLEFFREGNNRCTIPLLNLIRSHASPPEIRFYIEHQLPLSKRTQTPELIEVCREIEQRHSFEPLPKRHILDTTPNGSHDTPRLSVPAQPWTSIITDDGLVSRLIFLWFTWVHPFCNFIDRDRFIRDMKSGSLSASYCSPLLVNIILSDACHSASGLPDDLTSKRIEFYEEAERLLDKEEGRISLPTAQGLGVLWMCASITGRDRQAWIKGTQLAYSLRELSQVSCNLPSEANRDATALATIVNSTNWGLFNVAMVHALFARKRPIIEPPAQPPSVSNQCDHGMWYSYPNKSTGVESHTSCLFTAACNLNRIAYNLGRFLFSQEKKSSARLDLTDGELDALRDLNEWADQLPVCLKESIADLPHVLSLHMYNHAILTVVYGFLRTRPLYLPNPSASTPTVRDALMSPARAWAASLSSARKIAHLTLVHRANWGSDRMPGATVHCIMAALFALLDSVDDPANRDAFISLTAAAAAFSRRWESPIALLRNIQNIARQRDVTLPPETGAFFLDPDQPSGNSTPIKSETPEGTAIS.

The disordered stretch occupies residues 1 to 26 (MPPSSKSRRLPPAASDSAASDAQKRR). The zn(2)-C6 fungal-type DNA-binding region spans 33–59 (CSACKARKLKCTGAPPCANCVKSRIEC). The interval 591-620 (ETGAFFLDPDQPSGNSTPIKSETPEGTAIS) is disordered.

It is found in the nucleus. Functionally, transcription factor that probably regulates the expression of the gene cluster that mediates the biosynthesis of notoamide, a fungal indole alkaloid that belongs to a family of natural products containing a characteristic bicyclo[2.2.2]diazaoctane core. In Aspergillus versicolor, this protein is Notoamide biosynthesis transcriptional activator notL'.